The following is a 526-amino-acid chain: Zinc finger protein Helios (526 aa).

The interval 28-94 (DLTSSTPNGQ…IESSEVADNR (67 aa)) is disordered. Residues 29 to 50 (LTSSTPNGQHASPSHMTSTNSV) are compositionally biased toward polar residues. The residue at position 56 (Ser-56) is a Phosphoserine. Residues 61–77 (DRQPLSREDEIRGHDEG) are compositionally biased toward basic and acidic residues. Ser-78 and Ser-79 each carry phosphoserine. Residue Lys-95 forms a Glycyl lysine isopeptide (Lys-Gly) (interchain with G-Cter in SUMO2) linkage. C2H2-type zinc fingers lie at residues 112–134 (LKCD…KRSH), 140–162 (FHCN…IKLH), 168–190 (FKCP…LRTH), and 196–219 (HKCN…ERCH). An N6-acetyllysine modification is found at Lys-288. Residues 368 to 379 (ISRETSDSHENN) are compositionally biased toward basic and acidic residues. The interval 368 to 435 (ISRETSDSHE…LNPKRKQSPA (68 aa)) is disordered. Glycyl lysine isopeptide (Lys-Gly) (interchain with G-Cter in SUMO2) cross-links involve residues Lys-442 and Lys-448. C2H2-type zinc fingers lie at residues 471–493 (FKCE…MGCH) and 499–523 (LECN…RGEH).

Belongs to the Ikaros C2H2-type zinc-finger protein family. Can form homodimers. Interacts with IKZF4 and IKZF5. As to expression, expressed in outer hair cells (OHC) of the organ of Corti. Abundant in thymus, low expression in bone marrow and brain and no detectable expression in spleen, liver, kidney or muscle. Expressed in T-cells.

It is found in the nucleus. Functionally, transcriptional regulator required for outer hair cells (OHC) maturation and, consequently, for hearing. The polypeptide is Zinc finger protein Helios (Ikzf2) (Mus musculus (Mouse)).